Consider the following 320-residue polypeptide: Ribose-phosphate pyrophosphokinase 3 (320 aa).

4 residues coordinate Mg(2+): Asp131, His133, Asp142, and Asp146.

The protein belongs to the ribose-phosphate pyrophosphokinase family.

The protein localises to the cytoplasm. The enzyme catalyses D-ribose 5-phosphate + ATP = 5-phospho-alpha-D-ribose 1-diphosphate + AMP + H(+). The protein operates within metabolic intermediate biosynthesis; 5-phospho-alpha-D-ribose 1-diphosphate biosynthesis; 5-phospho-alpha-D-ribose 1-diphosphate from D-ribose 5-phosphate (route I): step 1/1. 5-phosphoribose 1-diphosphate synthase involved in nucleotide, histidine, and tryptophan biosynthesis. Active in heteromultimeric complexes with other 5-phosphoribose 1-diphosphate synthases (PRS2, PRS3, PRS4 and PRS5). The polypeptide is Ribose-phosphate pyrophosphokinase 3 (PRS3) (Saccharomyces cerevisiae (strain ATCC 204508 / S288c) (Baker's yeast)).